Consider the following 1001-residue polypeptide: Non-canonical poly(A) RNA polymerase protein Trf4-1 (1001 aa).

2 stretches are compositionally biased toward low complexity: residues T44 to S86 and R127 to G163. 2 disordered regions span residues T44–S92 and Q115–A238. A compositionally biased stretch (gly residues) spans P164–G178. Low complexity predominate over residues T179–S216. D328 and D330 together coordinate Mn(2+). Residues N458–G517 form the PAP-associated domain. Disordered regions lie at residues P631–H652, Q687–V740, A767–T963, and S977–R1001. A compositionally biased stretch (basic residues) spans G635–P649. Composition is skewed to low complexity over residues Q687–Q708 and S768–S788. The segment covering V827 to G841 has biased composition (gly residues). The span at Y844 to G854 shows a compositional bias: polar residues. Low complexity predominate over residues Y855–H880. The span at Q881–H912 shows a compositional bias: basic residues. Composition is skewed to low complexity over residues S932–S955 and S977–S992.

Belongs to the DNA polymerase type-B-like family. It depends on Mn(2+) as a cofactor.

The protein resides in the cytoplasm. It catalyses the reaction RNA(n) + ATP = RNA(n)-3'-adenine ribonucleotide + diphosphate. Its function is as follows. Involved in a post-transcriptional quality control mechanism limiting inappropriate expression of genetic information. Polyadenylation is required for the degradative activity of the exosome on several of its nuclear RNA substrates. Polyadenylates RNA processing and degradation intermediates of snRNAs and mRNAs. The polypeptide is Non-canonical poly(A) RNA polymerase protein Trf4-1 (Drosophila melanogaster (Fruit fly)).